The sequence spans 485 residues: MEKQVRVRYAPSPTGHLHIGNARTALFNYLFARHQDGKFIIRIEDTDVKRNVAGGEESQLKYLKWLGMDWDEGVDVGGEFGPYRQTERLDIYKKLYEDLLERGLAYKCYMTEEELEAEREGQIARGETPRYAGNHRDLTEAQVKEFEAEGRIPSIRFRVPADRDYTFKDIVKDEVAFHSNDFGDFVIVKKDGIPTYNFAVAVDDHLMEITHVLRGDDHISNTPKQMMIYEAFGWDIPQFGHMTLIVNESRKKLSKRDESIIQFIEQYKELGYLPEAIFNFIALLGWSPVGEEEIFSQEEFIKMFDAARLSKSPALFDSQKLKWMNNQYMKKQDLDTVVELSLPHLVKAGRIGETLSEQEQAWIRDVIALYHEQMSFGAEIVELSEMFFKDHVDYEEEGQEVLKGEQVPEVLRAFAGQVEALEAMEPAAIKAAIKAVQKETGHKGKNLFMPIRVATTGQTHGPELPNAIALLGKEKVLNRLQKVIG.

The 'HIGH' region motif lies at 11-21 (PSPTGHLHIGN). The short motif at 252–256 (KLSKR) is the 'KMSKS' region element. Lys255 lines the ATP pocket.

It belongs to the class-I aminoacyl-tRNA synthetase family. Glutamate--tRNA ligase type 1 subfamily. In terms of assembly, monomer.

Its subcellular location is the cytoplasm. The enzyme catalyses tRNA(Glu) + L-glutamate + ATP = L-glutamyl-tRNA(Glu) + AMP + diphosphate. Catalyzes the attachment of glutamate to tRNA(Glu) in a two-step reaction: glutamate is first activated by ATP to form Glu-AMP and then transferred to the acceptor end of tRNA(Glu). This is Glutamate--tRNA ligase from Bacillus thuringiensis (strain Al Hakam).